The chain runs to 696 residues: Translation initiation factor IF-2 (696 aa).

The region spanning 187 to 361 (ERPPVVTVMG…EMQEIKGIPD (175 aa)) is the tr-type G domain. A G1 region spans residues 196–203 (GHVDHGKT). 196–203 (GHVDHGKT) is a GTP binding site. Residues 221–225 (GITQS) form a G2 region. A G3 region spans residues 242–245 (DTPG). GTP is bound by residues 242 to 246 (DTPGH) and 296 to 299 (NKID). A G4 region spans residues 296–299 (NKID). Positions 333-335 (SAK) are G5.

Belongs to the TRAFAC class translation factor GTPase superfamily. Classic translation factor GTPase family. IF-2 subfamily.

The protein localises to the cytoplasm. Its function is as follows. One of the essential components for the initiation of protein synthesis. Protects formylmethionyl-tRNA from spontaneous hydrolysis and promotes its binding to the 30S ribosomal subunits. Also involved in the hydrolysis of GTP during the formation of the 70S ribosomal complex. In Thermosipho africanus (strain TCF52B), this protein is Translation initiation factor IF-2.